We begin with the raw amino-acid sequence, 699 residues long: MPAVSRPLPPLTALAPPELEWRADDISDAPYASAYGDVYFSRHDGRAETGHVFVEGNRLPERFAAWRETRAFVIGETGFGTGLNMLCAWACFERHAPAEARLHLVSTEKYPLPRDALARALAIWPDMAARAGVLLDQWPEPVGGVHRLWLSSRVVLDLHFGDAAERLSRLDGRVDAWFLDGFSPAKNPDMWQPELFAAMAQVSRPGATFATFTCAGVVKRGLRDAGFTWRKTPGFGRKREMLCGEIAAPPDDRRRASTPWFTPPRARPARHVVVIGAGLAGTSVAAALARRGVAVTLLERDAPGAGASGNRQGALYVKLAAETNPQSRVYLAGLLYTRRWLTALDPEQRLWQDCGVLQLAPGDKEATRQQRFLAHHALPERVLHGVDAATASQAAGTPLDAPGLDYPQAGWVRPDRLCQQLAASPGITQRRGEAHDLDFDADADAWRIALTDGSTLTADHVVVATAHEAPRFTPLAGLPLKPIRGQLTHVPVPADAPSLARVVCAGGYVAPAMEGVLSLGATFAPGDTDTAVRTTDHARNLDEFTATLPAFAEALRAAGVTLDPAACEGRASLRAASPDKSPYAGPVPVREAWLDDYAVLGADARRVPSTAGRHHPGLWVSAAHGSRGLASAPLCAEVIASRLCDEPLPLERELIDHLHPGRRLIADIIRGNATRGNATLSTSSPNDDAQPSPTTTETP.

The tRNA (mnm(5)s(2)U34)-methyltransferase stretch occupies residues 1 to 247; that stretch reads MPAVSRPLPP…KREMLCGEIA (247 aa). The tract at residues 275 to 699 is FAD-dependent cmnm(5)s(2)U34 oxidoreductase; that stretch reads IGAGLAGTSV…QPSPTTTETP (425 aa). Positions 675 to 699 are disordered; sequence RGNATLSTSSPNDDAQPSPTTTETP.

In the N-terminal section; belongs to the methyltransferase superfamily. tRNA (mnm(5)s(2)U34)-methyltransferase family. It in the C-terminal section; belongs to the DAO family. FAD is required as a cofactor.

It localises to the cytoplasm. The enzyme catalyses 5-aminomethyl-2-thiouridine(34) in tRNA + S-adenosyl-L-methionine = 5-methylaminomethyl-2-thiouridine(34) in tRNA + S-adenosyl-L-homocysteine + H(+). In terms of biological role, catalyzes the last two steps in the biosynthesis of 5-methylaminomethyl-2-thiouridine (mnm(5)s(2)U) at the wobble position (U34) in tRNA. Catalyzes the FAD-dependent demodification of cmnm(5)s(2)U34 to nm(5)s(2)U34, followed by the transfer of a methyl group from S-adenosyl-L-methionine to nm(5)s(2)U34, to form mnm(5)s(2)U34. This Chromohalobacter salexigens (strain ATCC BAA-138 / DSM 3043 / CIP 106854 / NCIMB 13768 / 1H11) protein is tRNA 5-methylaminomethyl-2-thiouridine biosynthesis bifunctional protein MnmC.